The primary structure comprises 86 residues: Small ribosomal subunit protein eS27 (86 aa).

The C4-type zinc-finger motif lies at 39 to 61 (CQGCFNITTVFSHSQTVVVCPGC).

This sequence belongs to the eukaryotic ribosomal protein eS27 family. Zn(2+) is required as a cofactor.

The chain is Small ribosomal subunit protein eS27 (RPS27) from Hordeum vulgare (Barley).